The following is a 155-amino-acid chain: UPF0178 protein mlr0875 (155 aa).

Belongs to the UPF0178 family.

This Mesorhizobium japonicum (strain LMG 29417 / CECT 9101 / MAFF 303099) (Mesorhizobium loti (strain MAFF 303099)) protein is UPF0178 protein mlr0875.